The sequence spans 433 residues: Origin recognition complex subunit 4 (433 aa).

At K7 the chain carries N6-methyllysine. 65–72 (GPRGSGKT) provides a ligand contact to ATP.

Belongs to the ORC4 family. In terms of assembly, component of ORC, a complex composed of at least 6 subunits: ORC1, ORC2, ORC3, ORC4, ORC5 and ORC6. ORC is regulated in a cell-cycle dependent manner. It is sequentially assembled at the exit from anaphase of mitosis and disassembled as cells enter S phase. Interacts with DBF4. Interacts with POLQ.

Its subcellular location is the nucleus. Its function is as follows. Binds histone H3 and H4 trimethylation marks H3K9me3, H3K27me3 and H4K20me3. Component of the origin recognition complex (ORC) that binds origins of replication. DNA-binding is ATP-dependent. The specific DNA sequences that define origins of replication have not been identified yet. ORC is required to assemble the pre-replication complex necessary to initiate DNA replication. This Mus musculus (Mouse) protein is Origin recognition complex subunit 4 (Orc4).